Reading from the N-terminus, the 255-residue chain is AA9 family lytic polysaccharide monooxygenase D (255 aa).

Positions 1-19 (MYRTLGSIALLAGGAAAHG) are cleaved as a signal peptide. Cu(2+)-binding residues include His-18 and His-92. Disulfide bonds link Cys-65-Cys-189 and Cys-104-Cys-111. N-linked (GlcNAc...) asparagine glycosylation is present at Asn-152. O2-binding residues include His-178 and Gln-184. Tyr-186 is a binding site for Cu(2+). A glycan (N-linked (GlcNAc...) asparagine) is linked at Asn-220.

This sequence belongs to the polysaccharide monooxygenase AA9 family. Cu(2+) is required as a cofactor.

The protein resides in the secreted. It catalyses the reaction [(1-&gt;4)-beta-D-glucosyl]n+m + reduced acceptor + O2 = 4-dehydro-beta-D-glucosyl-[(1-&gt;4)-beta-D-glucosyl]n-1 + [(1-&gt;4)-beta-D-glucosyl]m + acceptor + H2O.. Its function is as follows. Lytic polysaccharide monooxygenase (LPMO) that depolymerizes crystalline and amorphous polysaccharides via the oxidation of scissile alpha- or beta-(1-4)-glycosidic bonds, yielding specifically C1 oxidation product. Catalysis by LPMOs requires the reduction of the active-site copper from Cu(II) to Cu(I) by a reducing agent and H(2)O(2) or O(2) as a cosubstrate. Is active on regenerated amorphous cellulose (RAC) in the presence of ascorbic acid or 3-methylcatechol. Also acts on phosphoric acid swollen cellulose (PASC) as a substrate. The sequence is that of AA9 family lytic polysaccharide monooxygenase D from Thermothelomyces thermophilus (strain ATCC 42464 / BCRC 31852 / DSM 1799) (Sporotrichum thermophile).